The primary structure comprises 399 residues: O-antigen polymerase (399 aa).

10 helical membrane-spanning segments follow: residues 4 to 24, 37 to 57, 64 to 84, 97 to 117, 151 to 171, 185 to 205, 222 to 242, 309 to 329, 353 to 373, and 374 to 394; these read FPPGAILRDVLNVFFVALVLV, LVFTIFSWSAVILWVIALTIF, AIMGGRSYILFPAVFIALVIL, IVCYIIFLMFMVATISIIDVL, GGFSDALNFGYMLTLGVLLCM, IISFVLFIAICMSLTRGAILV, FCGITLFVIIIPVLAISTNIF, FFWIALETGIIGLIINIIYLA, LYFLFGSIYFISAALSSAPSS, and STFSIYYWTVLALIPFLKLTN.

Its subcellular location is the cell inner membrane. It catalyses the reaction n lipid-linked O-antigen repeat units = a lipid-linked O antigen + (n-1) polyisoprenyl diphosphate.. Its pathway is bacterial outer membrane biogenesis; LPS O-antigen biosynthesis. Its function is as follows. Polymerase involved in the biosynthesis of the lipopolysaccharide (LPS). Catalyzes the polymerization of the O-antigen repeat units on the periplasmic face of the inner membrane, leading to the formation of the lipid-linked O-antigen molecule. This Salmonella muenchen protein is O-antigen polymerase.